The sequence spans 290 residues: Arginine and glutamate-rich protein 1 (290 aa).

Over residues 1-10 the composition is skewed to polar residues; it reads MGSRSRTPSP. Disordered regions lie at residues 1 to 137, 193 to 216, and 249 to 290; these read MGSR…AKEL, ERRREQIREEERRREEDEKQKREE, and MDEE…PGAL. The segment covering 12–28 has biased composition (basic residues); sequence GKRRHHKSKHKKRSKSH. Composition is skewed to basic and acidic residues over residues 29–44 and 53–76; these read HDHERPSTRTDRDKSS and RERDRDRERDRHRSDRHTERDYRH. 2 positions are modified to phosphoserine: Ser-77 and Ser-79. A compositionally biased stretch (low complexity) spans 88-99; sequence SSSSSDSQYSEQ. Positions 111 to 269 form a coiled coil; it reads FKKLDEQNQM…QEKRVKEEQK (159 aa). Residues 124 to 137 are compositionally biased toward basic and acidic residues; the sequence is RLAEMERQRRAKEL. A compositionally biased stretch (basic and acidic residues) spans 249–269; that stretch reads MDEERQRMRKEQEKRVKEEQK.

Belongs to the ARGLU1 family. Associates with the U1-snRNP complex; the interaction is enhanced by binding of Arglu1 to a stable intronic sequence RNA (sisRNA) produced from the Arglu1 gene by premature cleavage.

Its subcellular location is the nucleus. It localises to the nucleus speckle. Post-transcriptional regulator of gene expression; modulates splicing and premature cleavage at cryptic polyadenylation sites of its own pre-mRNA through binding and regulation of the U1-snRNP complex. The sequence is that of Arginine and glutamate-rich protein 1 from Drosophila melanogaster (Fruit fly).